A 1178-amino-acid polypeptide reads, in one-letter code: DNA-directed RNA polymerase subunit beta' (1178 aa).

Zn(2+)-binding residues include cysteine 60, cysteine 62, cysteine 75, and cysteine 78. The Mg(2+) site is built by aspartate 450, aspartate 452, and aspartate 454. Zn(2+)-binding residues include cysteine 795, cysteine 869, cysteine 876, and cysteine 879.

The protein belongs to the RNA polymerase beta' chain family. In terms of assembly, the RNAP catalytic core consists of 2 alpha, 1 beta, 1 beta' and 1 omega subunit. When a sigma factor is associated with the core the holoenzyme is formed, which can initiate transcription. Mg(2+) serves as cofactor. It depends on Zn(2+) as a cofactor.

The catalysed reaction is RNA(n) + a ribonucleoside 5'-triphosphate = RNA(n+1) + diphosphate. Functionally, DNA-dependent RNA polymerase catalyzes the transcription of DNA into RNA using the four ribonucleoside triphosphates as substrates. The chain is DNA-directed RNA polymerase subunit beta' from Clostridium botulinum (strain Loch Maree / Type A3).